We begin with the raw amino-acid sequence, 557 residues long: Protein Red (557 aa).

The segment at 1–90 is disordered; it reads MPERDSEPFS…YAKLRQQEIE (90 aa). Residues 16-25 show a composition bias toward basic and acidic residues; sequence DGHDVDDPHS. A compositionally biased stretch (low complexity) spans 42–53; that stretch reads TPRAAPTSAPPS. 2 positions are modified to N6-acetyllysine: Lys98 and Lys137. A Glycyl lysine isopeptide (Lys-Gly) (interchain with G-Cter in SUMO2) cross-link involves residue Lys151. Residues 181–205 are disordered; sequence KEKEEEELMEKPQKETKKDEDPENK. Position 287 is a phosphoserine (Ser287). Basic residues predominate over residues 294–303; sequence RNKKLKKKDK. The segment at 294–402 is disordered; the sequence is RNKKLKKKDK…PMDVDKGPGS (109 aa). Residues 304 to 313 are compositionally biased toward basic and acidic residues; it reads GKLEEKKPPE. Glycyl lysine isopeptide (Lys-Gly) (interchain with G-Cter in SUMO2) cross-links involve residues Lys310 and Lys331. Residues 332–398 are compositionally biased toward basic and acidic residues; sequence TPRDKERERY…VDDEPMDVDK (67 aa). Repeat copies occupy residues 342–343, 344–345, 346–347, 348–349, 350–351, 352–353, 354–355, 356–357, 358–359, 360–361, 362–363, 364–365, 366–367, 368–369, 370–371, 372–373, and 374–375. A 17 X 2 AA tandem repeats of R-[ED] region spans residues 342 to 375; that stretch reads RERERDRERDRDRERDRERDRERERERDRERERE. Glycyl lysine isopeptide (Lys-Gly) (interchain with G-Cter in SUMO2) cross-links involve residues Lys386, Lys388, Lys404, and Lys408. A phosphoserine mark is found at Ser417 and Ser460. Thr485 carries the post-translational modification Phosphothreonine. Glycyl lysine isopeptide (Lys-Gly) (interchain with G-Cter in SUMO2) cross-links involve residues Lys496, Lys501, and Lys509. Residue Ser536 is modified to Phosphoserine. Glycyl lysine isopeptide (Lys-Gly) (interchain with G-Cter in SUMO2) cross-links involve residues Lys541, Lys543, and Lys553.

The protein belongs to the RED family. Component of the spliceosome B complex. Interacts with SMU1. Interacts with MAD1L1. May interact with DHX15. In terms of tissue distribution, ubiquitous.

The protein resides in the nucleus. Its subcellular location is the nucleoplasm. It localises to the chromosome. It is found in the cytoplasm. The protein localises to the cytoskeleton. The protein resides in the spindle pole. Its function is as follows. Involved in pre-mRNA splicing as a component of the spliceosome. Auxiliary spliceosomal protein that regulates selection of alternative splice sites in a small set of target pre-mRNA species. Required for normal mitotic cell cycle progression. Recruits MAD1L1 and MAD2L1 to kinetochores, and is required to trigger the spindle assembly checkpoint. Required for normal accumulation of SMU1. The protein is Protein Red (Ik) of Mus musculus (Mouse).